A 516-amino-acid chain; its full sequence is Myocyte-specific enhancer factor 2A homolog (516 aa).

An interaction with hdac9 region spans residues 1 to 100; the sequence is MGRKKIQITR…KGLNGCESPD (100 aa). An MADS-box domain is found at 3–57; the sequence is RKKIQITRIMDERNRQVTFTKRKFGLMKKAYELSVLCDCEIALIIFNSSNKLFQY. The mef2-type DNA-binding region spans 58 to 86; that stretch reads ASTDMDKVLLKYTEYNEPHESRTNSDIVE. Residues 318–339 are disordered; sequence PSSKGMMPPLNTQRVTSSQGTQ. Over residues 327 to 339 the composition is skewed to polar residues; the sequence is LNTQRVTSSQGTQ. At T343 the chain carries Phosphothreonine; by NLK. The residue at position 386 (S386) is a Phosphoserine; by NLK. Residues 420-433 show a composition bias toward polar residues; it reads GSNLSINTNQNINI. Positions 420 to 516 are disordered; the sequence is GSNLSINTNQ…KRMRMDAWVT (97 aa). Residues 465–475 show a composition bias toward low complexity; it reads DSLSSSSSSYD. 2 stretches are compositionally biased toward basic and acidic residues: residues 476–486 and 497–516; these read GSDREDVRNDF and NNEDRDSPSVKRMRMDAWVT.

The protein belongs to the MEF2 family. In terms of assembly, interacts with hdac9 and nlk2. Restricted to the somitic mesoderm of early embryos. Expressed in the head region of neurula stage embryos and in body muscle (myotomes) of the tadpole. Expressed in all tissues examined in the adult.

It is found in the nucleus. Functionally, may regulate muscle-specific transcription in the embryo and may regulate transcription of a variety of cell types in the adult. Binds to the sequence 5'-CTA[TA]4TAR-3'. Acts downstream of nlk2 in anterior neural development, including eye formation. This is Myocyte-specific enhancer factor 2A homolog (mef2a) from Xenopus laevis (African clawed frog).